A 275-amino-acid chain; its full sequence is 2,3,4,5-tetrahydropyridine-2,6-dicarboxylate N-succinyltransferase (275 aa).

Substrate-binding residues include Arg106 and Asp143.

This sequence belongs to the transferase hexapeptide repeat family. In terms of assembly, homotrimer.

The protein localises to the cytoplasm. It carries out the reaction (S)-2,3,4,5-tetrahydrodipicolinate + succinyl-CoA + H2O = (S)-2-succinylamino-6-oxoheptanedioate + CoA. Its pathway is amino-acid biosynthesis; L-lysine biosynthesis via DAP pathway; LL-2,6-diaminopimelate from (S)-tetrahydrodipicolinate (succinylase route): step 1/3. This Cupriavidus necator (strain ATCC 17699 / DSM 428 / KCTC 22496 / NCIMB 10442 / H16 / Stanier 337) (Ralstonia eutropha) protein is 2,3,4,5-tetrahydropyridine-2,6-dicarboxylate N-succinyltransferase.